The primary structure comprises 130 residues: Small ribosomal subunit protein uS8 (130 aa).

It belongs to the universal ribosomal protein uS8 family. As to quaternary structure, part of the 30S ribosomal subunit. Contacts proteins S5 and S12.

Its function is as follows. One of the primary rRNA binding proteins, it binds directly to 16S rRNA central domain where it helps coordinate assembly of the platform of the 30S subunit. The polypeptide is Small ribosomal subunit protein uS8 (Pseudomonas entomophila (strain L48)).